The sequence spans 366 residues: MASSLRAAISKIKRDDVGQQVCPNYVMLRSSVNTKVVRNVVDYQIKTGGFFSCIAMLRPLQYAKRERLLGQRNLERIAARDVLQTRDLHSLCMPTPDAPMTNYQASTMRELVCDHFKVDHVDGLRYVPMDDRYSPSSLARLFTMGMAGLHITTEPAYKRVPIMHLAADLDCMTFALPYMITVDGDTVVPVAPTLPAERLLDDGFKGYGCLDISYGCEVDANNRSAGDQSMDSSRCINELYTAETAEAICILKTCLILNCMQFKLEMDDLAHNGFELDKVQMMIPFSERVFRMASAFATIDVQCFRFCLLMKDKNLKIDMRETMRLWTRAGSDDAISTSSLTISLDRGRWVAMDMNEVRLLVFPARV.

Residues 1–11 (MASSLRAAISK) are important for ssRNA-binding and formation of complexes.

The protein belongs to the orthoreovirus sigma-NS protein family. As to quaternary structure, homooligomer; in presence of RNA. Interacts with protein mu-NS; this interaction allows the localization of sigma-NS to the viral factories. Interacts with host G3BP1 (via C-terminus); this interaction induces the relocalization of G3BP1 and other SG proteins to the viral factories periphery.

It is found in the host cytoplasm. In terms of biological role, protein that binds to ssRNA and participates with protein mu-NS in forming the matrix of viral factories, which are large inclusions in the host cytoplasm where replication intermediates are assembled and viral RNA replication takes place. Plays a role in the inhibition of the integrated stress response (ISR) to escape from host cell translational shutoff. Participates in the disruption of stress granules (SG) through its association with host G3BP1 and mu-NS. The polypeptide is Protein sigma-NS (S3) (Mammalia (T2J)).